A 352-amino-acid chain; its full sequence is Dysbindin (352 aa).

Position 11 is a phosphoserine (S11). Residues 88–176 (EKKRTSLNEL…EAFKAELDTE (89 aa)) adopt a coiled-coil conformation. The tract at residues 173–325 (LDTEHTQKAL…DEEEVQVDTA (153 aa)) is dysbindin. Positions 243–256 (LMDISDQEALDVFL) match the Nuclear export signal motif. A disordered region spans residues 267–352 (SPGVEMESNP…SDQCDSTQDI (86 aa)). Over residues 274 to 285 (SNPNQNEMSLQI) the composition is skewed to polar residues. Residues 286–301 (PSPSESASQPPASPSA) are compositionally biased toward low complexity. 3 positions are modified to phosphoserine: S315, S340, and S343.

This sequence belongs to the dysbindin family. As to quaternary structure, interacts with AP3M1 and TRIM32. Interacts (isoform 1 and isoform 2 only) with the DNA-dependent protein kinase complex DNA-PK; the interaction phosphorylates DTNBP1 in vitro. Interacts directly in this complex with XRCC5 and XRCC6. Interacts with XPO1; the interaction exports DTNBP1 out of the nucleus. Component of the biogenesis of lysosome-related organelles complex 1 (BLOC-1) composed of BLOC1S1, BLOC1S2, BLOC1S3, BLOC1S4, BLOC1S5, BLOC1S6, DTNBP1/BLOC1S7 and SNAPIN/BLOC1S8. The BLOC-1 complex associates with the AP-3 protein complex and membrane protein cargos. This BLOC-1 complex also associates with the BLOC-2 complex in endosomes. Binds to DTNA and DTNB but may not be a physiological binding partner. Interacts (via its coiled coil domain) with KXD1. Interacts with AP3B2, BLOC1S5, BLOC1S6, CMYA5, PI4K2, RNF151 and SNAPIN/BLOC1S8. Interacts with XPO1; the interaction exports DTNBP1 out of the nucleus. Ubiquitinated by TRIM32. Ubiquitination leads to DTNBP1 degradation. Detected in brain, in hippocampus and dentate gyrus neurons. Detected at axon bundles and axon terminals, notably in the cerebellum and hippocampus. Detected in neuropil in hippocampus, lateral septum, basal ganglia and substantia nigra. Highly expressed in pyramidal cells of hippocampus CA2 and CA3. Detected at the heart and skeletal muscle sarcolemma (at protein level). Ubiquitously expressed. The highest expression is observed in testis, liver, kidney, brain, heart and lung. Expressed at lower levels in stomach and small intestine.

The protein resides in the cytoplasm. The protein localises to the cytoplasmic vesicle membrane. It localises to the endosome membrane. Its subcellular location is the melanosome membrane. It is found in the postsynaptic density. The protein resides in the endoplasmic reticulum. The protein localises to the nucleus. It localises to the cytoplasmic vesicle. Its subcellular location is the secretory vesicle. It is found in the synaptic vesicle membrane. The protein resides in the postsynaptic cell membrane. Its function is as follows. Component of the BLOC-1 complex, a complex that is required for normal biogenesis of lysosome-related organelles (LRO), such as platelet dense granules and melanosomes. In concert with the AP-3 complex, the BLOC-1 complex is required to target membrane protein cargos into vesicles assembled at cell bodies for delivery into neurites and nerve terminals. The BLOC-1 complex, in association with SNARE proteins, is also proposed to be involved in neurite extension. Associates with the BLOC-2 complex to facilitate the transport of TYRP1 independent of AP-3 function. Plays a role in synaptic vesicle trafficking and in neurotransmitter release. Plays a role in the regulation of cell surface exposure of DRD2. May play a role in actin cytoskeleton reorganization and neurite outgrowth. May modulate MAPK8 phosphorylation. Appears to promote neuronal transmission and viability through regulating the expression of SNAP25 and SYN1, modulating PI3-kinase-Akt signaling and influencing glutamatergic release. Regulates the expression of SYN1 through binding to its promoter. Modulates prefrontal cortical activity via the dopamine/D2 pathway. This chain is Dysbindin (Dtnbp1), found in Mus musculus (Mouse).